Here is a 320-residue protein sequence, read N- to C-terminus: Biotin synthase (320 aa).

The region spanning 45–274 (NDLQKASLLS…DSRIRLSAGR (230 aa)) is the Radical SAM core domain. [4Fe-4S] cluster contacts are provided by cysteine 60, cysteine 64, and cysteine 67. [2Fe-2S] cluster-binding residues include cysteine 105, cysteine 137, cysteine 197, and arginine 269.

This sequence belongs to the radical SAM superfamily. Biotin synthase family. As to quaternary structure, homodimer. [4Fe-4S] cluster is required as a cofactor. The cofactor is [2Fe-2S] cluster.

It carries out the reaction (4R,5S)-dethiobiotin + (sulfur carrier)-SH + 2 reduced [2Fe-2S]-[ferredoxin] + 2 S-adenosyl-L-methionine = (sulfur carrier)-H + biotin + 2 5'-deoxyadenosine + 2 L-methionine + 2 oxidized [2Fe-2S]-[ferredoxin]. Its pathway is cofactor biosynthesis; biotin biosynthesis; biotin from 7,8-diaminononanoate: step 2/2. Functionally, catalyzes the conversion of dethiobiotin (DTB) to biotin by the insertion of a sulfur atom into dethiobiotin via a radical-based mechanism. The sequence is that of Biotin synthase from Beijerinckia indica subsp. indica (strain ATCC 9039 / DSM 1715 / NCIMB 8712).